The chain runs to 275 residues: Polyamine aminopropyltransferase (275 aa).

The PABS domain maps to 2-235; that stretch reads HLWFTEKQND…AMWSFTIGSK (234 aa). Q31 provides a ligand contact to S-methyl-5'-thioadenosine. Residues H62 and D86 each coordinate spermidine. Residues E106 and 137 to 138 each bind S-methyl-5'-thioadenosine; that span reads DG. The Proton acceptor role is filled by D155. Position 155-158 (155-158) interacts with spermidine; it reads DSTD. P162 is an S-methyl-5'-thioadenosine binding site.

Belongs to the spermidine/spermine synthase family. As to quaternary structure, homodimer or homotetramer.

Its subcellular location is the cytoplasm. The enzyme catalyses S-adenosyl 3-(methylsulfanyl)propylamine + putrescine = S-methyl-5'-thioadenosine + spermidine + H(+). The protein operates within amine and polyamine biosynthesis; spermidine biosynthesis; spermidine from putrescine: step 1/1. In terms of biological role, catalyzes the irreversible transfer of a propylamine group from the amino donor S-adenosylmethioninamine (decarboxy-AdoMet) to putrescine (1,4-diaminobutane) to yield spermidine. The polypeptide is Polyamine aminopropyltransferase (Desulforudis audaxviator (strain MP104C)).